Here is a 597-residue protein sequence, read N- to C-terminus: Nuclear receptor subfamily 4 group A member 1 (597 aa).

The disordered stretch occupies residues 1-22; sequence MPCIQAQYGTPATSPGPRDHLT. Positions 170–465 are required for nuclear import; it reads RVWTEQLPKA…PGEGKLIFCS (296 aa). A DNA-binding region (nuclear receptor) is located at residues 263–338; that stretch reads EGRCAVCGDN…VGMVKEVVRT (76 aa). 2 consecutive NR C4-type zinc fingers follow at residues 266 to 286 and 302 to 326; these read CAVCGDNASCQHYGVRTCEGC and CLANKDCPVDKRRRNRCQFCRFQKC. The interval 267–353 is required for binding NBRE-containing DNA; that stretch reads AVCGDNASCQ…RRGRLPSKPK (87 aa). The interval 298 to 360 is required for the interaction with RXRA; that stretch reads AKYICLANKD…KPKQPPDASP (63 aa). The residue at position 340 (S340) is a Phosphoserine; by PKA. A disordered region spans residues 341-360; sequence LKGRRGRLPSKPKQPPDASP. Phosphoserine; by PKA, RPS6KA1 and RPS6KA3 is present on S350. The NR LBD domain occupies 359 to 594; that stretch reads SPTNLLTSLI…PIVDKIFMDT (236 aa). Residues 520-543 form a binds lipopolysaccharide region; it reads PRRVEELQNRIASCLKEHMAAVAG. Residues 583 to 594 are AF-2; sequence PPPIVDKIFMDT.

This sequence belongs to the nuclear hormone receptor family. NR4 subfamily. In terms of assembly, binds the NGFI-B response element (NBRE) as a monomer. Binds the Nur response element (NurRE), consisting of two inverse NBRE-related octanucleotide repeats separated by 6 base-pairs, as a dimer. Interacts (via N-terminus) with NLRP3 (via LRR repeat domain); the interaction is direct, requires binding of NR4A1/Nur77 to NBRE-containing dsDNA and lipopolysaccharide, and leads to non-canonical NLRP3 inflammasome activation. Interacts with GADD45GIP1. Interacts with STK11. Interacts with IFI27. Heterodimer (via DNA-binding domain) with RXRA (via C-terminus); DNA-binding of the heterodimer is enhanced by 9-cis retinoic acid. Competes for the RXRA interaction with EP300 and thereby attenuates EP300 mediated acetylation of RXRA. Interacts with NCOA1. Interacts with NCOA2. Interacts with NCOA3. Requires Zn(2+) as cofactor. Phosphorylated at Ser-350 by RPS6KA1 and RPS6KA3 in response to mitogenic or stress stimuli. Phosphorylation of Ser-350 results in decrease in NBRE binding while phosphorylation of Ser-340 has little effect on it. Post-translationally, acetylated by p300/CBP, acetylation increases stability. Deacetylated by HDAC1. As to expression, expressed in lung, brain and superior cervical ganglia. High levels are seen in the adrenal tissue.

It localises to the nucleus. Its subcellular location is the cytoplasm. The protein resides in the cytosol. It is found in the mitochondrion. Functionally, orphan nuclear receptor. Binds the NGFI-B response element (NBRE) 5'-AAAGGTCA-3'. Binds 9-cis-retinoic acid outside of its ligand-binding (NR LBD) domain. Participates in energy homeostasis by sequestrating the kinase STK11 in the nucleus, thereby attenuating cytoplasmic AMPK activation. Regulates the inflammatory response in macrophages by regulating metabolic adaptations during inflammation, including repressing the transcription of genes involved in the citric acid cycle (TCA). Inhibits NF-kappa-B signaling by binding to low-affinity NF-kappa-B binding sites, such as at the IL2 promoter. May act concomitantly with NR4A2 in regulating the expression of delayed-early genes during liver regeneration. Plays a role in the vascular response to injury. Its function is as follows. In the cytosol, upon its detection of both bacterial lipopolysaccharide (LPS) and NBRE-containing mitochondrial DNA released by GSDMD pores during pyroptosis, it promotes non-canonical NLRP3 inflammasome activation by stimulating association of NLRP3 and NEK7. The polypeptide is Nuclear receptor subfamily 4 group A member 1 (Nr4a1) (Rattus norvegicus (Rat)).